The primary structure comprises 372 residues: L-selectin (372 aa).

Residues 1-28 (MIFPWKCQSTQRDLWNIFKLWGWTMLCC) form the signal peptide. The propeptide occupies 29-38 (DFLAHHGTDC). Residues 39–332 (WTYHYSEKPM…FSMIKEGDYN (294 aa)) are Extracellular-facing. The region spanning 55 to 155 (RFCRDNYTDL…ACHKLKAALC (101 aa)) is the C-type lectin domain. Cystine bridges form between Cys57–Cys155, Cys128–Cys147, Cys128–Cys160, Cys160–Cys171, Cys165–Cys180, Cys182–Cys191, Cys197–Cys241, Cys227–Cys254, Cys259–Cys303, and Cys289–Cys316. N-linked (GlcNAc...) asparagine glycans are attached at residues Asn60 and Asn104. Positions 118, 120, 126, 143, and 144 each coordinate Ca(2+). The 37-residue stretch at 156-192 (YTASCQPWSCSGHGECVEIINNYTCNCDVGYYGPQCQ) folds into the EGF-like domain. Asn177 carries N-linked (GlcNAc...) asparagine glycosylation. Sushi domains lie at 195 to 256 (IQCE…TCQV) and 257 to 318 (IQCE…ICQK). Asn216, Asn232, Asn246, and Asn271 each carry an N-linked (GlcNAc...) asparagine glycan. Residues 333 to 355 (PLFIPVAVMVTAFSGLAFIIWLA) form a helical membrane-spanning segment. The Cytoplasmic portion of the chain corresponds to 356–372 (RRLKKGKKSKRSMDDPY).

It belongs to the selectin/LECAM family. As to quaternary structure, interaction with SELPLG/PSGL1 and PODXL2 is required for promoting recruitment and rolling of leukocytes. This interaction is dependent on the sialyl Lewis X glycan modification of SELPLG and PODXL2, and tyrosine sulfation modifications of SELPLG. Sulfation on 'Tyr-51' of SELPLG is important for L-selectin binding. Post-translationally, N-glycosylated.

It localises to the cell membrane. Calcium-dependent lectin that mediates cell adhesion by binding to glycoproteins on neighboring cells. Mediates the adherence of lymphocytes to endothelial cells of high endothelial venules in peripheral lymph nodes. Promotes initial tethering and rolling of leukocytes in endothelia. The polypeptide is L-selectin (SELL) (Pan troglodytes (Chimpanzee)).